Reading from the N-terminus, the 143-residue chain is Large ribosomal subunit protein uL16 (143 aa).

It belongs to the universal ribosomal protein uL16 family. Part of the 50S ribosomal subunit.

Its function is as follows. Binds 23S rRNA and is also seen to make contacts with the A and possibly P site tRNAs. The protein is Large ribosomal subunit protein uL16 of Fusobacterium nucleatum subsp. nucleatum (strain ATCC 25586 / DSM 15643 / BCRC 10681 / CIP 101130 / JCM 8532 / KCTC 2640 / LMG 13131 / VPI 4355).